Reading from the N-terminus, the 385-residue chain is Elongation factor Ts, mitochondrial (385 aa).

The N-terminal 50 residues, 1 to 50, are a transit peptide targeting the mitochondrion; the sequence is MAWSQSARKPMIGLLFRAQQHGARGYSYSAFQAHLSSSNVDQSATLLRRF.

Belongs to the EF-Ts family.

Its subcellular location is the mitochondrion. Functionally, associates with the EF-Tu.GDP complex and induces the exchange of GDP to GTP. It remains bound to the aminoacyl-tRNA.EF-Tu.GTP complex up to the GTP hydrolysis stage on the ribosome. The protein is Elongation factor Ts, mitochondrial of Oryza sativa subsp. indica (Rice).